The chain runs to 370 residues: 1-propanol dehydrogenase PduQ (370 aa).

Belongs to the iron-containing alcohol dehydrogenase family. Interacts with PduP, probably via the N-terminus of PduQ. The cofactor is Fe cation.

Its subcellular location is the bacterial microcompartment. The catalysed reaction is 1-propanol + NAD(+) = propanal + NADH + H(+). It functions in the pathway polyol metabolism; 1,2-propanediol degradation. Functionally, an iron-dependent alcohol dehydrogenase required for optimal 1,2-propanediol (1,2-PD) degradation. NAD(+) and NADH are regenerated internally within the bacterial microcompartment (BMC) dedicated to 1,2-PD degradation by the PduP and PduQ enzymes, which reduce NAD(+) and oxidize NADH respectively, although there must also be cofactor transport across the BMC. Expression of a cosmid containing the full 21-gene pdu operon in E.coli allows E.coli to grow on 1,2-propanediol (1,2-PD) with the appearance of bacterial microcompartments (BMC) in its cytoplasm. In terms of biological role, the 1,2-PD-specific bacterial microcompartment (BMC) concentrates low levels of 1,2-PD catabolic enzymes, concentrates volatile reaction intermediates thus enhancing pathway flux and keeps the level of toxic, mutagenic propionaldehyde low. In Citrobacter freundii, this protein is 1-propanol dehydrogenase PduQ.